The chain runs to 315 residues: Aspartate carbamoyltransferase catalytic subunit (315 aa).

Carbamoyl phosphate-binding residues include arginine 54 and threonine 55. Lysine 82 is an L-aspartate binding site. Residues arginine 104, histidine 134, and glutamine 137 each coordinate carbamoyl phosphate. 2 residues coordinate L-aspartate: arginine 174 and arginine 229. Carbamoyl phosphate is bound by residues glycine 270 and proline 271.

It belongs to the aspartate/ornithine carbamoyltransferase superfamily. ATCase family. Heterododecamer (2C3:3R2) of six catalytic PyrB chains organized as two trimers (C3), and six regulatory PyrI chains organized as three dimers (R2).

The enzyme catalyses carbamoyl phosphate + L-aspartate = N-carbamoyl-L-aspartate + phosphate + H(+). Its pathway is pyrimidine metabolism; UMP biosynthesis via de novo pathway; (S)-dihydroorotate from bicarbonate: step 2/3. In terms of biological role, catalyzes the condensation of carbamoyl phosphate and aspartate to form carbamoyl aspartate and inorganic phosphate, the committed step in the de novo pyrimidine nucleotide biosynthesis pathway. This Leifsonia xyli subsp. xyli (strain CTCB07) protein is Aspartate carbamoyltransferase catalytic subunit.